The following is a 168-amino-acid chain: Probable prefoldin subunit 5 (168 aa).

Belongs to the prefoldin subunit alpha family. As to quaternary structure, heterohexamer of two PFD-alpha type and four PFD-beta type subunits.

In terms of biological role, binds specifically to cytosolic chaperonin (c-CPN) and transfers target proteins to it. Binds to nascent polypeptide chain and promotes folding in an environment in which there are many competing pathways for nonnative proteins. The sequence is that of Probable prefoldin subunit 5 from Drosophila melanogaster (Fruit fly).